A 581-amino-acid polypeptide reads, in one-letter code: Proline--tRNA ligase (581 aa).

Belongs to the class-II aminoacyl-tRNA synthetase family. ProS type 1 subfamily. Homodimer.

The protein localises to the cytoplasm. The catalysed reaction is tRNA(Pro) + L-proline + ATP = L-prolyl-tRNA(Pro) + AMP + diphosphate. Catalyzes the attachment of proline to tRNA(Pro) in a two-step reaction: proline is first activated by ATP to form Pro-AMP and then transferred to the acceptor end of tRNA(Pro). As ProRS can inadvertently accommodate and process non-cognate amino acids such as alanine and cysteine, to avoid such errors it has two additional distinct editing activities against alanine. One activity is designated as 'pretransfer' editing and involves the tRNA(Pro)-independent hydrolysis of activated Ala-AMP. The other activity is designated 'posttransfer' editing and involves deacylation of mischarged Ala-tRNA(Pro). The misacylated Cys-tRNA(Pro) is not edited by ProRS. This is Proline--tRNA ligase from Blochmanniella floridana.